Reading from the N-terminus, the 872-residue chain is Alanine--tRNA ligase (872 aa).

The Zn(2+) site is built by His566, His570, Cys668, and His672.

This sequence belongs to the class-II aminoacyl-tRNA synthetase family. Requires Zn(2+) as cofactor.

The protein localises to the cytoplasm. It carries out the reaction tRNA(Ala) + L-alanine + ATP = L-alanyl-tRNA(Ala) + AMP + diphosphate. In terms of biological role, catalyzes the attachment of alanine to tRNA(Ala) in a two-step reaction: alanine is first activated by ATP to form Ala-AMP and then transferred to the acceptor end of tRNA(Ala). Also edits incorrectly charged Ser-tRNA(Ala) and Gly-tRNA(Ala) via its editing domain. In Lactococcus lactis subsp. lactis (strain IL1403) (Streptococcus lactis), this protein is Alanine--tRNA ligase.